The following is a 53-amino-acid chain: Conotoxin Cal9.2e (53 aa).

Positions 1-6 are excised as a propeptide; that stretch reads KKGVTQ. Disulfide bonds link Cys15-Cys32, Cys20-Cys42, and Cys22-Cys47.

In terms of tissue distribution, expressed by the venom duct.

The protein resides in the secreted. Probable neurotoxin with unknown target. Possibly targets ion channels. The polypeptide is Conotoxin Cal9.2e (Californiconus californicus (California cone)).